Here is a 157-residue protein sequence, read N- to C-terminus: Cyclic pyranopterin monophosphate synthase (157 aa).

Residues 74–76 and 112–113 each bind substrate; these read MCH and ME. Aspartate 127 is an active-site residue.

The protein belongs to the MoaC family. As to quaternary structure, homohexamer; trimer of dimers.

It catalyses the reaction (8S)-3',8-cyclo-7,8-dihydroguanosine 5'-triphosphate = cyclic pyranopterin phosphate + diphosphate. It participates in cofactor biosynthesis; molybdopterin biosynthesis. In terms of biological role, catalyzes the conversion of (8S)-3',8-cyclo-7,8-dihydroguanosine 5'-triphosphate to cyclic pyranopterin monophosphate (cPMP). The protein is Cyclic pyranopterin monophosphate synthase of Campylobacter lari (strain RM2100 / D67 / ATCC BAA-1060).